A 280-amino-acid polypeptide reads, in one-letter code: Tryptophan synthase alpha chain (280 aa).

Residues glutamate 49 and aspartate 60 each act as proton acceptor in the active site.

It belongs to the TrpA family. As to quaternary structure, tetramer of two alpha and two beta chains.

It catalyses the reaction (1S,2R)-1-C-(indol-3-yl)glycerol 3-phosphate + L-serine = D-glyceraldehyde 3-phosphate + L-tryptophan + H2O. It participates in amino-acid biosynthesis; L-tryptophan biosynthesis; L-tryptophan from chorismate: step 5/5. The alpha subunit is responsible for the aldol cleavage of indoleglycerol phosphate to indole and glyceraldehyde 3-phosphate. The sequence is that of Tryptophan synthase alpha chain from Corynebacterium glutamicum (strain ATCC 13032 / DSM 20300 / JCM 1318 / BCRC 11384 / CCUG 27702 / LMG 3730 / NBRC 12168 / NCIMB 10025 / NRRL B-2784 / 534).